The primary structure comprises 380 residues: Septin homolog spn6 (380 aa).

The 271-residue stretch at 27–297 (KECGLTIMLC…ERYRREQLTN (271 aa)) folds into the Septin-type G domain. The G1 motif stretch occupies residues 37 to 44 (GASGTGKT). GTP contacts are provided by residues 37–44 (GASGTGKT), threonine 72, glycine 98, 177–185 (KADTFTTPE), and arginine 246. The segment at 95-98 (DTPG) is G3 motif. Residues 176 to 179 (AKAD) form a G4 motif region. A coiled-coil region spans residues 304-380 (KLKKEHYERL…KSYKGRGHKK (77 aa)).

Belongs to the TRAFAC class TrmE-Era-EngA-EngB-Septin-like GTPase superfamily. Septin GTPase family. In terms of assembly, component of the sporulation-specific septin complex composed of at least spn2, spn5, spn6 and spn7.

The protein resides in the cytoplasm. Its subcellular location is the forespore membrane. Its function is as follows. Septin-like protein involved in the correct orientation of forespore membrane extension during sporulation. The chain is Septin homolog spn6 (spn6) from Schizosaccharomyces pombe (strain 972 / ATCC 24843) (Fission yeast).